We begin with the raw amino-acid sequence, 59 residues long: MDVKRVKQILSSSNRIDVTYEGVPVWIESCDEQSGVAQVYDVSNPGESVHVNVTALEEK.

Belongs to the SspH family.

It localises to the spore core. This Bacillus cereus (strain ZK / E33L) protein is Small, acid-soluble spore protein H.